A 266-amino-acid polypeptide reads, in one-letter code: ATP synthase subunit a (266 aa).

6 helical membrane-spanning segments follow: residues 38–58 (KQML…ILAA), 99–119 (LLFS…IPVI), 126–146 (HVGG…IIGI), 162–182 (GVPW…NFLV), 191–211 (LFAT…GIEF), and 224–244 (SVLV…IMAL).

Belongs to the ATPase A chain family. F-type ATPases have 2 components, CF(1) - the catalytic core - and CF(0) - the membrane proton channel. CF(1) has five subunits: alpha(3), beta(3), gamma(1), delta(1), epsilon(1). CF(0) has three main subunits: a(1), b(2) and c(9-12). The alpha and beta chains form an alternating ring which encloses part of the gamma chain. CF(1) is attached to CF(0) by a central stalk formed by the gamma and epsilon chains, while a peripheral stalk is formed by the delta and b chains.

Its subcellular location is the cell membrane. In terms of biological role, key component of the proton channel; it plays a direct role in the translocation of protons across the membrane. The protein is ATP synthase subunit a of Paenarthrobacter aurescens (strain TC1).